The primary structure comprises 1037 residues: Glycine dehydrogenase (decarboxylating) 1, mitochondrial (1037 aa).

The N-terminal 67 residues, 1-67 (MERARRLAYR…AFGRHQQTRS (67 aa)), are a transit peptide targeting the mitochondrion. At C98 the chain carries S-glutathionyl cysteine; transient. An S-glutathionyl cysteine mark is found at C402 and C463. K774 bears the N6-(pyridoxal phosphate)lysine mark. Residues C777, C943, and C1022 each carry the S-glutathionyl cysteine; transient modification.

This sequence belongs to the GcvP family. Homodimer. The glycine cleavage system is composed of four proteins: P, T, L and H. It depends on pyridoxal 5'-phosphate as a cofactor. Glutathionylated at Cys-98, Cys-777, Cys-943 and Cys-1022 after S-nitrosoglutathione treatment. In terms of processing, S-nitrosylated at unknown positions by nitric oxide. In terms of tissue distribution, expressed in leaves. Detected in roots, stems, flowers and siliques.

The protein resides in the mitochondrion. The enzyme catalyses N(6)-[(R)-lipoyl]-L-lysyl-[glycine-cleavage complex H protein] + glycine + H(+) = N(6)-[(R)-S(8)-aminomethyldihydrolipoyl]-L-lysyl-[glycine-cleavage complex H protein] + CO2. With respect to regulation, inhibited by harpin, S-nitrosoglutathione (GSNO), nitric oxide, N-ethylmaleimide and 5,5'-dithiobis-(2-nitrobenzoic acid). In terms of biological role, the glycine decarboxylase (GDC) or glycine cleavage system catalyzes the degradation of glycine. The P protein binds the alpha-amino group of glycine through its pyridoxal phosphate cofactor; CO(2) is released and the remaining methylamine moiety is then transferred to the lipoamide cofactor of the H protein. This is Glycine dehydrogenase (decarboxylating) 1, mitochondrial (GLDP1) from Arabidopsis thaliana (Mouse-ear cress).